We begin with the raw amino-acid sequence, 364 residues long: PHD finger protein 6 (364 aa).

Ser2 bears the N-acetylserine mark. Short sequence motifs (nuclear localization signal) lie at residues 13-16 (RQRK) and 129-133 (RKHKK). The C2HC pre-PHD-type 1 zinc-finger motif lies at 14–52 (QRKCGFCKSNRDKECGQLLISENQKVAAHHKCMLFSSAL). Residues 14 to 132 (QRKCGFCKSN…IYMVYCRKHK (119 aa)) form an extended PHD1 domain (ePHD1) region. The PHD-type 1 zinc-finger motif lies at 80–132 (LMCSLCHCPGATIGCDVKTCHRTYHYHCALHDKAQIREKPSQGIYMVYCRKHK). 3 positions are modified to phosphoserine: Ser138, Ser145, and Ser155. The disordered stretch occupies residues 139-211 (EADLEESFNE…RSSPNDTRPK (73 aa)). The Nucleolar localization signal signature appears at 157 to 169 (KTKKKSRKGRPRK). Basic residues predominate over residues 157 to 171 (KTKKKSRKGRPRKTN). Residue Lys173 forms a Glycyl lysine isopeptide (Lys-Gly) (interchain with G-Cter in SUMO2) linkage. Ser183 and Ser199 each carry phosphoserine. The C2HC pre-PHD-type 2 zinc finger occupies 209-249 (RPKCGFCHVGEEENEARGKLHIFNAKKAAAHYKCMLFSSGT). The extended PHD2 domain (ePHD2) stretch occupies residues 209 to 330 (RPKCGFCHVG…IYKLYCKNHS (122 aa)). Lys227 is covalently cross-linked (Glycyl lysine isopeptide (Lys-Gly) (interchain with G-Cter in SUMO2)). The PHD-type 2 zinc finger occupies 278–330 (MKCTLCSQPGATIGCEIKACVKTYHYHCGVQDKAKYIENMSRGIYKLYCKNHS). Residues 330–364 (SGNDERDEEDEERESKSRGRVAIDQQLTQQQLNGN) are disordered. The span at 354 to 364 (QQLTQQQLNGN) shows a compositional bias: polar residues. Position 357 is a phosphothreonine (Thr357).

As to quaternary structure, interacts with UBTF. Interacts with the NuRD complex component RBBP4 (via the nucleolar localization motif), the interaction mediates transcriptional repression activity. In terms of tissue distribution, at 12.5 dpc it is highly expressed in the embryonic central nervous system and at lower levels in other tissues. Very low levels present throughout the adult brain.

Its subcellular location is the nucleus. The protein localises to the nucleolus. The protein resides in the chromosome. It localises to the centromere. It is found in the kinetochore. In terms of biological role, transcriptional regulator that associates with ribosomal RNA promoters and suppresses ribosomal RNA (rRNA) transcription. In Mus musculus (Mouse), this protein is PHD finger protein 6 (Phf6).